The chain runs to 98 residues: Class II hydrophobin 2 (98 aa).

The N-terminal stretch at methionine 1 to alanine 21 is a signal peptide. Cystine bridges form between cysteine 34–cysteine 80, cysteine 41–cysteine 71, cysteine 42–cysteine 54, and cysteine 81–cysteine 92.

The protein belongs to the cerato-ulmin hydrophobin family.

The protein localises to the secreted. Its subcellular location is the cell wall. Its function is as follows. Aerial growth, conidiation, and dispersal of filamentous fungi in the environment rely upon a capability of their secreting small amphipathic proteins called hydrophobins (HPBs) with low sequence identity. Class I can self-assemble into an outermost layer of rodlet bundles on aerial cell surfaces, conferring cellular hydrophobicity that supports fungal growth, development and dispersal; whereas Class II form highly ordered films at water-air interfaces through intermolecular interactions but contribute nothing to the rodlet structure. In Botryotinia fuckeliana, hydrophobins are not involved in conferring surface hydrophobicity to conidia and aerial hyphae and their function in sclerotia and fruiting bodies remains to be investigated. In Botryotinia fuckeliana (strain B05.10) (Noble rot fungus), this protein is Class II hydrophobin 2.